A 238-amino-acid polypeptide reads, in one-letter code: Large ribosomal subunit protein uL2 (238 aa).

The tract at residues 201–238 is disordered; sequence PFGGGGRQHPGRPKTVSRNTPPGRKVGSIAARRTGVGH.

Belongs to the universal ribosomal protein uL2 family. In terms of assembly, part of the 50S ribosomal subunit. Forms a bridge to the 30S subunit in the 70S ribosome.

Its function is as follows. One of the primary rRNA binding proteins. Required for association of the 30S and 50S subunits to form the 70S ribosome, for tRNA binding and peptide bond formation. It has been suggested to have peptidyltransferase activity; this is somewhat controversial. Makes several contacts with the 16S rRNA in the 70S ribosome. In Methanocella arvoryzae (strain DSM 22066 / NBRC 105507 / MRE50), this protein is Large ribosomal subunit protein uL2.